A 324-amino-acid chain; its full sequence is Beta-ketoacyl-[acyl-carrier-protein] synthase III (324 aa).

Residues cysteine 116 and histidine 251 contribute to the active site. Residues 252–256 (QANLR) are ACP-binding. The active site involves asparagine 281.

It belongs to the thiolase-like superfamily. FabH family. Homodimer.

It is found in the cytoplasm. It catalyses the reaction malonyl-[ACP] + acetyl-CoA + H(+) = 3-oxobutanoyl-[ACP] + CO2 + CoA. The protein operates within lipid metabolism; fatty acid biosynthesis. In terms of biological role, catalyzes the condensation reaction of fatty acid synthesis by the addition to an acyl acceptor of two carbons from malonyl-ACP. Catalyzes the first condensation reaction which initiates fatty acid synthesis and may therefore play a role in governing the total rate of fatty acid production. Possesses both acetoacetyl-ACP synthase and acetyl transacylase activities. Its substrate specificity determines the biosynthesis of branched-chain and/or straight-chain of fatty acids. The chain is Beta-ketoacyl-[acyl-carrier-protein] synthase III from Xylella fastidiosa (strain 9a5c).